The sequence spans 684 residues: Glycine--tRNA ligase beta subunit (684 aa).

This sequence belongs to the class-II aminoacyl-tRNA synthetase family. In terms of assembly, tetramer of two alpha and two beta subunits.

The protein resides in the cytoplasm. It carries out the reaction tRNA(Gly) + glycine + ATP = glycyl-tRNA(Gly) + AMP + diphosphate. This is Glycine--tRNA ligase beta subunit from Pseudomonas syringae pv. tomato (strain ATCC BAA-871 / DC3000).